Here is a 152-residue protein sequence, read N- to C-terminus: Cell division protein SepF (152 aa).

It belongs to the SepF family. Homodimer. Interacts with FtsZ.

It is found in the cytoplasm. Functionally, cell division protein that is part of the divisome complex and is recruited early to the Z-ring. Probably stimulates Z-ring formation, perhaps through the cross-linking of FtsZ protofilaments. Its function overlaps with FtsA. The chain is Cell division protein SepF from Clostridioides difficile (strain 630) (Peptoclostridium difficile).